We begin with the raw amino-acid sequence, 50 residues long: Large ribosomal subunit protein bL33 (50 aa).

Belongs to the bacterial ribosomal protein bL33 family.

The chain is Large ribosomal subunit protein bL33 from Sulfurovum sp. (strain NBC37-1).